A 203-amino-acid chain; its full sequence is Ribosomal RNA large subunit methyltransferase E (203 aa).

S-adenosyl-L-methionine contacts are provided by G51, W53, D69, D85, and D109. K149 functions as the Proton acceptor in the catalytic mechanism.

This sequence belongs to the class I-like SAM-binding methyltransferase superfamily. RNA methyltransferase RlmE family.

It is found in the cytoplasm. It catalyses the reaction uridine(2552) in 23S rRNA + S-adenosyl-L-methionine = 2'-O-methyluridine(2552) in 23S rRNA + S-adenosyl-L-homocysteine + H(+). Functionally, specifically methylates the uridine in position 2552 of 23S rRNA at the 2'-O position of the ribose in the fully assembled 50S ribosomal subunit. The polypeptide is Ribosomal RNA large subunit methyltransferase E (Methanoculleus marisnigri (strain ATCC 35101 / DSM 1498 / JR1)).